The sequence spans 334 residues: GTPase Obg (334 aa).

One can recognise an Obg domain in the interval 4 to 162 (FDFIDEVKKY…GWIKLELKLL (159 aa)). The OBG-type G domain occupies 163–330 (AEVGLVGFPN…FKDKIWKLLH (168 aa)). Residues 169–176 (GFPNAGKS), 194–198 (FTTLV), 216–219 (DMPG), 284–287 (SKLD), and 311–313 (SSV) each bind GTP. Residues Ser176 and Thr196 each contribute to the Mg(2+) site.

It belongs to the TRAFAC class OBG-HflX-like GTPase superfamily. OBG GTPase family. In terms of assembly, monomer. It depends on Mg(2+) as a cofactor.

It localises to the cytoplasm. In terms of biological role, an essential GTPase which binds GTP, GDP and possibly (p)ppGpp with moderate affinity, with high nucleotide exchange rates and a fairly low GTP hydrolysis rate. Plays a role in control of the cell cycle, stress response, ribosome biogenesis and in those bacteria that undergo differentiation, in morphogenesis control. The polypeptide is GTPase Obg (Amoebophilus asiaticus (strain 5a2)).